The sequence spans 325 residues: GMP reductase (325 aa).

The active-site Thioimidate intermediate is Cys173. Residue 202–225 coordinates NADP(+); it reads IIADGGIRSHGDIAKSVRFGATMV.

The protein belongs to the IMPDH/GMPR family. GuaC type 2 subfamily.

It carries out the reaction IMP + NH4(+) + NADP(+) = GMP + NADPH + 2 H(+). Catalyzes the irreversible NADPH-dependent deamination of GMP to IMP. It functions in the conversion of nucleobase, nucleoside and nucleotide derivatives of G to A nucleotides, and in maintaining the intracellular balance of A and G nucleotides. The protein is GMP reductase of Acidovorax ebreus (strain TPSY) (Diaphorobacter sp. (strain TPSY)).